A 348-amino-acid chain; its full sequence is LRP2-binding protein (348 aa).

The stretch at 60 to 93 is one TPR repeat; it reads TLAYFLRGQLYFEEGWYEEALEQFEEIEEKDHQA. Sel1-like repeat units follow at residues 94–126, 134–169, 174–207, 208–243, 244–278, and 298–333; these read TYQL…DSPC, FAAA…DNGN, VKAQ…GNGN, LESQ…ERGN, VYAQ…EVHD, and AMAS…RLNP.

In terms of assembly, interacts with LRP2.

The protein localises to the cytoplasm. Functionally, may act as an adapter that regulates LRP2 function. The chain is LRP2-binding protein (LRP2BP) from Macaca fascicularis (Crab-eating macaque).